The chain runs to 544 residues: MVSLLRCQSSKPYSSLICSLALGVAFALSGTAYAEETKPTETVPAPVVTPPKVTPPPATKNQVRFTKTGAFDSDYVVKLARKLAAKPYSVLKDPLPVGLAKLTYDEYRDIRFNPTASIWRDQGLPFQMQMFHRGFYFQDLIEIAIVEGNKATHLAYEPKYFTAGEVITQALPNDDIGYSGFRIHNQLNNNGVFDELMVFQGASYFRALGKGNAYGLSARGLALKTADPEGEEFPIFRAFWVERPHYDSNLIVVHALLDSPSVAGAYRFSVRPGDNTQIDVEATLFPRVELSKVGLAPSTSMFLHSLNGRHDTDDFRPEVHDSDGLLMFNGRGEHLWRPLANPRQLQVSAFSDNSPQGFGLIQRERSYAAYQDLEAQYERRPSLWIEPVGNWGQGAVVLTEIPTESEIHDNIVSFWKPRQPIPAGSEYHFAYRMSWGEEPAVKHNYVVVSRTASGRADIAKPTPRRLFVVDYQVNGAMPEELPLAKVEASGGIISNVVIAPNAANNGYRLAFELEPEGKELIELRAELKFPTPRQVETWLYRWTL.

The first 34 residues, M1–A34, serve as a signal peptide directing secretion.

This sequence belongs to the OpgD/OpgG family.

The protein localises to the periplasm. It participates in glycan metabolism; osmoregulated periplasmic glucan (OPG) biosynthesis. Its function is as follows. Involved in the biosynthesis of osmoregulated periplasmic glucans (OPGs). The protein is Glucans biosynthesis protein G of Shewanella putrefaciens (strain CN-32 / ATCC BAA-453).